Here is a 294-residue protein sequence, read N- to C-terminus: Ribosomal protein L11 methyltransferase (294 aa).

S-adenosyl-L-methionine-binding residues include T145, G167, D189, and N230.

It belongs to the methyltransferase superfamily. PrmA family.

It is found in the cytoplasm. It carries out the reaction L-lysyl-[protein] + 3 S-adenosyl-L-methionine = N(6),N(6),N(6)-trimethyl-L-lysyl-[protein] + 3 S-adenosyl-L-homocysteine + 3 H(+). In terms of biological role, methylates ribosomal protein L11. In Alkalilimnicola ehrlichii (strain ATCC BAA-1101 / DSM 17681 / MLHE-1), this protein is Ribosomal protein L11 methyltransferase.